The sequence spans 305 residues: tRNA pseudouridine synthase B (305 aa).

Asp39 functions as the Nucleophile in the catalytic mechanism. One can recognise a PUA domain in the interval 237-305; the sequence is LPVIIVPGEF…FLLKPHKVLK (69 aa).

This sequence belongs to the pseudouridine synthase TruB family. Type 1 subfamily.

It catalyses the reaction uridine(55) in tRNA = pseudouridine(55) in tRNA. Functionally, responsible for synthesis of pseudouridine from uracil-55 in the psi GC loop of transfer RNAs. The chain is tRNA pseudouridine synthase B from Moorella thermoacetica (strain ATCC 39073 / JCM 9320).